Consider the following 178-residue polypeptide: NAD(P)H-quinone oxidoreductase subunit J (178 aa).

This sequence belongs to the complex I 30 kDa subunit family. As to quaternary structure, NDH-1 can be composed of about 15 different subunits; different subcomplexes with different compositions have been identified which probably have different functions.

It is found in the cellular thylakoid membrane. The enzyme catalyses a plastoquinone + NADH + (n+1) H(+)(in) = a plastoquinol + NAD(+) + n H(+)(out). It catalyses the reaction a plastoquinone + NADPH + (n+1) H(+)(in) = a plastoquinol + NADP(+) + n H(+)(out). In terms of biological role, NDH-1 shuttles electrons from an unknown electron donor, via FMN and iron-sulfur (Fe-S) centers, to quinones in the respiratory and/or the photosynthetic chain. The immediate electron acceptor for the enzyme in this species is believed to be plastoquinone. Couples the redox reaction to proton translocation, and thus conserves the redox energy in a proton gradient. Cyanobacterial NDH-1 also plays a role in inorganic carbon-concentration. The chain is NAD(P)H-quinone oxidoreductase subunit J from Crocosphaera subtropica (strain ATCC 51142 / BH68) (Cyanothece sp. (strain ATCC 51142)).